A 447-amino-acid polypeptide reads, in one-letter code: Probable cytosol aminopeptidase (447 aa).

Residues Lys218 and Asp223 each coordinate Mn(2+). The active site involves Lys230. Positions 241, 300, and 302 each coordinate Mn(2+). Arg304 is an active-site residue.

The protein belongs to the peptidase M17 family. Mn(2+) is required as a cofactor.

It localises to the cytoplasm. The enzyme catalyses Release of an N-terminal amino acid, Xaa-|-Yaa-, in which Xaa is preferably Leu, but may be other amino acids including Pro although not Arg or Lys, and Yaa may be Pro. Amino acid amides and methyl esters are also readily hydrolyzed, but rates on arylamides are exceedingly low.. The catalysed reaction is Release of an N-terminal amino acid, preferentially leucine, but not glutamic or aspartic acids.. In terms of biological role, presumably involved in the processing and regular turnover of intracellular proteins. Catalyzes the removal of unsubstituted N-terminal amino acids from various peptides. The sequence is that of Probable cytosol aminopeptidase (pepA) from Mycoplasma genitalium (strain ATCC 33530 / DSM 19775 / NCTC 10195 / G37) (Mycoplasmoides genitalium).